The following is a 39-amino-acid chain: Photosystem II reaction center protein L (39 aa).

Residues 18–38 (SLYLGLLLVFVLGILFSSYFF) traverse the membrane as a helical segment.

This sequence belongs to the PsbL family. PSII is composed of 1 copy each of membrane proteins PsbA, PsbB, PsbC, PsbD, PsbE, PsbF, PsbH, PsbI, PsbJ, PsbK, PsbL, PsbM, PsbT, PsbX, PsbY, PsbZ, Psb30/Ycf12, peripheral proteins PsbO, CyanoQ (PsbQ), PsbU, PsbV and a large number of cofactors. It forms dimeric complexes.

It is found in the cellular thylakoid membrane. Functionally, one of the components of the core complex of photosystem II (PSII). PSII is a light-driven water:plastoquinone oxidoreductase that uses light energy to abstract electrons from H(2)O, generating O(2) and a proton gradient subsequently used for ATP formation. It consists of a core antenna complex that captures photons, and an electron transfer chain that converts photonic excitation into a charge separation. This subunit is found at the monomer-monomer interface and is required for correct PSII assembly and/or dimerization. The sequence is that of Photosystem II reaction center protein L from Trichormus variabilis (strain ATCC 29413 / PCC 7937) (Anabaena variabilis).